We begin with the raw amino-acid sequence, 152 residues long: Xanthine-guanine phosphoribosyltransferase (152 aa).

Residues 37-38, R69, and 88-96 each bind 5-phospho-alpha-D-ribose 1-diphosphate; these read RG and DDLVDTGGT. R69 serves as a coordination point for GMP. D89 is a Mg(2+) binding site. The guanine site is built by D92 and I135. 2 residues coordinate xanthine: D92 and I135. GMP-binding positions include 92-96 and 134-135; these read DTGGT and WI.

It belongs to the purine/pyrimidine phosphoribosyltransferase family. XGPT subfamily. As to quaternary structure, homotetramer. It depends on Mg(2+) as a cofactor.

The protein resides in the cell inner membrane. It carries out the reaction GMP + diphosphate = guanine + 5-phospho-alpha-D-ribose 1-diphosphate. The catalysed reaction is XMP + diphosphate = xanthine + 5-phospho-alpha-D-ribose 1-diphosphate. It catalyses the reaction IMP + diphosphate = hypoxanthine + 5-phospho-alpha-D-ribose 1-diphosphate. It functions in the pathway purine metabolism; GMP biosynthesis via salvage pathway; GMP from guanine: step 1/1. The protein operates within purine metabolism; XMP biosynthesis via salvage pathway; XMP from xanthine: step 1/1. Functionally, purine salvage pathway enzyme that catalyzes the transfer of the ribosyl-5-phosphate group from 5-phospho-alpha-D-ribose 1-diphosphate (PRPP) to the N9 position of the 6-oxopurines guanine and xanthine to form the corresponding ribonucleotides GMP (guanosine 5'-monophosphate) and XMP (xanthosine 5'-monophosphate), with the release of PPi. To a lesser extent, also acts on hypoxanthine. This Klebsiella pneumoniae (strain 342) protein is Xanthine-guanine phosphoribosyltransferase.